The chain runs to 161 residues: uncharacterized protein (161 aa).

The span at 1–16 (MPRAGRAPAEGGPAPG) shows a compositional bias: low complexity. Disordered stretches follow at residues 1-23 (MPRA…SRCL), 50-91 (GRPV…TQSA), and 140-161 (RGPA…WRIS).

This is an uncharacterized protein from Homo sapiens (Human).